A 196-amino-acid chain; its full sequence is Nucleoid occlusion factor SlmA (196 aa).

The region spanning 7 to 68 (SNRREEILQA…GLIEFIEEAL (62 aa)) is the HTH tetR-type domain. The H-T-H motif DNA-binding region spans 31-50 (TTVKLAKQVGVSEAALYRHF). The stretch at 65–142 (EEALMSRINR…QLRQILRERK (78 aa)) forms a coiled coil.

It belongs to the nucleoid occlusion factor SlmA family. As to quaternary structure, homodimer. Interacts with FtsZ.

It localises to the cytoplasm. It is found in the nucleoid. Its function is as follows. Required for nucleoid occlusion (NO) phenomenon, which prevents Z-ring formation and cell division over the nucleoid. Acts as a DNA-associated cell division inhibitor that binds simultaneously chromosomal DNA and FtsZ, and disrupts the assembly of FtsZ polymers. SlmA-DNA-binding sequences (SBS) are dispersed on non-Ter regions of the chromosome, preventing FtsZ polymerization at these regions. The sequence is that of Nucleoid occlusion factor SlmA from Vibrio atlanticus (strain LGP32) (Vibrio splendidus (strain Mel32)).